Consider the following 84-residue polypeptide: CDC42 small effector protein 2 (84 aa).

S-palmitoyl cysteine attachment occurs at residues Cys10 and Cys11. Positions 29 to 42 constitute a CRIB domain; it reads IGEPTNFAHTAHVG. Phosphoserine occurs at positions 43 and 52.

This sequence belongs to the CDC42SE/SPEC family. Interacts with CDC42 (in GTP-bound form). Interacts weakly with RAC1 and not at all with RHOA.

The protein localises to the cytoplasm. It is found in the cytoskeleton. The protein resides in the cell membrane. It localises to the cell projection. Its subcellular location is the phagocytic cup. Its function is as follows. Probably involved in the organization of the actin cytoskeleton by acting downstream of CDC42, inducing actin filament assembly. Alters CDC42-induced cell shape changes. In activated T-cells, may play a role in CDC42-mediated F-actin accumulation at the immunological synapse. May play a role in early contractile events in phagocytosis in macrophages. This is CDC42 small effector protein 2 (CDC42SE2) from Pongo abelii (Sumatran orangutan).